A 520-amino-acid polypeptide reads, in one-letter code: BTB/POZ domain-containing protein At3g50780 (520 aa).

Residues 43–68 form a disordered region; the sequence is SHNSLTKHKQSSPALQPPKPEKKPSS. Positions 127–196 constitute a BTB domain; it reads AKVILVGKQG…MYCKDMKQRL (70 aa).

Its pathway is protein modification; protein ubiquitination. May act as a substrate-specific adapter of an E3 ubiquitin-protein ligase complex (CUL3-RBX1-BTB) which mediates the ubiquitination and subsequent proteasomal degradation of target proteins. This chain is BTB/POZ domain-containing protein At3g50780, found in Arabidopsis thaliana (Mouse-ear cress).